A 180-amino-acid polypeptide reads, in one-letter code: Large ribosomal subunit protein uL5 (180 aa).

This sequence belongs to the universal ribosomal protein uL5 family. Part of the 50S ribosomal subunit; part of the 5S rRNA/L5/L18/L25 subcomplex. Contacts the 5S rRNA and the P site tRNA. Forms a bridge to the 30S subunit in the 70S ribosome.

In terms of biological role, this is one of the proteins that bind and probably mediate the attachment of the 5S RNA into the large ribosomal subunit, where it forms part of the central protuberance. In the 70S ribosome it contacts protein S13 of the 30S subunit (bridge B1b), connecting the 2 subunits; this bridge is implicated in subunit movement. Contacts the P site tRNA; the 5S rRNA and some of its associated proteins might help stabilize positioning of ribosome-bound tRNAs. This Mycoplasma capricolum subsp. capricolum (strain California kid / ATCC 27343 / NCTC 10154) protein is Large ribosomal subunit protein uL5.